Reading from the N-terminus, the 61-residue chain is Opistoporin-4 (61 aa).

Positions 45 to 61 (EAGQMPFDEFMDILHYY) are excised as a propeptide.

Belongs to the non-disulfide-bridged peptide (NDBP) superfamily. Long chain multifunctional peptide (group 2) family. In terms of tissue distribution, expressed by the venom gland.

The protein resides in the secreted. It localises to the target cell membrane. At high concentrations, acts as a pore former in cellular membranes and causes the leakage of the cells. At submicromolar concentrations, degranulates granulocytes and has a weak hemolytic activity against human erythrocytes. Also strongly inhibits the production of superoxide anions. Has a strong antibacterial activity against Gram-negative bacteria but is less active against Gram-positive bacteria. Also has antifungal activity. This chain is Opistoporin-4, found in Opistophthalmus carinatus (African yellow leg scorpion).